Reading from the N-terminus, the 265-residue chain is Serine protease 1 (265 aa).

The N-terminal stretch at M1–A21 is a signal peptide. Positions Q22–R35 are excised as a propeptide. One can recognise a Peptidase S1 domain in the interval I36–G262. C63 and C79 form a disulfide bridge. Catalysis depends on charge relay system residues H78 and D123. Cystine bridges form between C189/C201 and C211/C239. Catalysis depends on S215, which acts as the Charge relay system.

The protein belongs to the peptidase S1 family. In terms of tissue distribution, abundantly expressed in the larval gut.

Major function may be to aid in digestion. The sequence is that of Serine protease 1 from Drosophila melanogaster (Fruit fly).